A 185-amino-acid chain; its full sequence is Crossover junction endodeoxyribonuclease RuvC (185 aa).

Catalysis depends on residues aspartate 16, glutamate 75, and aspartate 147. Mg(2+) is bound by residues aspartate 16, glutamate 75, and aspartate 147.

The protein belongs to the RuvC family. In terms of assembly, homodimer which binds Holliday junction (HJ) DNA. The HJ becomes 2-fold symmetrical on binding to RuvC with unstacked arms; it has a different conformation from HJ DNA in complex with RuvA. In the full resolvosome a probable DNA-RuvA(4)-RuvB(12)-RuvC(2) complex forms which resolves the HJ. Requires Mg(2+) as cofactor.

The protein localises to the cytoplasm. The catalysed reaction is Endonucleolytic cleavage at a junction such as a reciprocal single-stranded crossover between two homologous DNA duplexes (Holliday junction).. Its function is as follows. The RuvA-RuvB-RuvC complex processes Holliday junction (HJ) DNA during genetic recombination and DNA repair. Endonuclease that resolves HJ intermediates. Cleaves cruciform DNA by making single-stranded nicks across the HJ at symmetrical positions within the homologous arms, yielding a 5'-phosphate and a 3'-hydroxyl group; requires a central core of homology in the junction. The consensus cleavage sequence is 5'-(A/T)TT(C/G)-3'. Cleavage occurs on the 3'-side of the TT dinucleotide at the point of strand exchange. HJ branch migration catalyzed by RuvA-RuvB allows RuvC to scan DNA until it finds its consensus sequence, where it cleaves and resolves the cruciform DNA. The sequence is that of Crossover junction endodeoxyribonuclease RuvC from Aromatoleum aromaticum (strain DSM 19018 / LMG 30748 / EbN1) (Azoarcus sp. (strain EbN1)).